A 240-amino-acid chain; its full sequence is MAPK-interacting and spindle-stabilizing protein-like (240 aa).

Positions 1–240 (MSDEFSLADA…PMPGGPHSYH (240 aa)) are disordered. N-acetylserine is present on Ser-2. Ser-2, Ser-6, and Ser-15 each carry phosphoserine. Over residues 16–26 (PAKTSAVSNTK) the composition is skewed to polar residues. Residues 34–43 (WPGSNPWNNP) show a composition bias toward low complexity. 4 stretches are compositionally biased toward pro residues: residues 44-66 (SAPP…PFGP), 74-122 (SVPP…PELP), 159-185 (PNMP…PPVP), and 193-202 (AWGPPAPYPA).

It belongs to the MISS family.

This is MAPK-interacting and spindle-stabilizing protein-like (MAPK1IP1L) from Bos taurus (Bovine).